Consider the following 72-residue polypeptide: ATP synthase subunit c (72 aa).

The next 2 membrane-spanning stretches (helical) occupy residues 1–21 (MSLG…GAGI) and 48–68 (MFIG…FSFI).

Belongs to the ATPase C chain family. As to quaternary structure, F-type ATPases have 2 components, F(1) - the catalytic core - and F(0) - the membrane proton channel. F(1) has five subunits: alpha(3), beta(3), gamma(1), delta(1), epsilon(1). F(0) has three main subunits: a(1), b(2) and c(10-14). The alpha and beta chains form an alternating ring which encloses part of the gamma chain. F(1) is attached to F(0) by a central stalk formed by the gamma and epsilon chains, while a peripheral stalk is formed by the delta and b chains.

The protein localises to the cell membrane. Functionally, f(1)F(0) ATP synthase produces ATP from ADP in the presence of a proton or sodium gradient. F-type ATPases consist of two structural domains, F(1) containing the extramembraneous catalytic core and F(0) containing the membrane proton channel, linked together by a central stalk and a peripheral stalk. During catalysis, ATP synthesis in the catalytic domain of F(1) is coupled via a rotary mechanism of the central stalk subunits to proton translocation. In terms of biological role, key component of the F(0) channel; it plays a direct role in translocation across the membrane. A homomeric c-ring of between 10-14 subunits forms the central stalk rotor element with the F(1) delta and epsilon subunits. This chain is ATP synthase subunit c, found in Geobacillus kaustophilus (strain HTA426).